Reading from the N-terminus, the 500-residue chain is Lysine--tRNA ligase (500 aa).

2 residues coordinate Mg(2+): Glu-410 and Glu-417.

Belongs to the class-II aminoacyl-tRNA synthetase family. As to quaternary structure, homodimer. It depends on Mg(2+) as a cofactor.

It localises to the cytoplasm. The catalysed reaction is tRNA(Lys) + L-lysine + ATP = L-lysyl-tRNA(Lys) + AMP + diphosphate. This chain is Lysine--tRNA ligase, found in Shewanella piezotolerans (strain WP3 / JCM 13877).